Here is a 294-residue protein sequence, read N- to C-terminus: UDP-3-O-acyl-N-acetylglucosamine deacetylase (294 aa).

3 residues coordinate Zn(2+): histidine 75, histidine 232, and aspartate 236. Histidine 259 (proton donor) is an active-site residue.

It belongs to the LpxC family. It depends on Zn(2+) as a cofactor.

It catalyses the reaction a UDP-3-O-[(3R)-3-hydroxyacyl]-N-acetyl-alpha-D-glucosamine + H2O = a UDP-3-O-[(3R)-3-hydroxyacyl]-alpha-D-glucosamine + acetate. Its pathway is glycolipid biosynthesis; lipid IV(A) biosynthesis; lipid IV(A) from (3R)-3-hydroxytetradecanoyl-[acyl-carrier-protein] and UDP-N-acetyl-alpha-D-glucosamine: step 2/6. Its function is as follows. Catalyzes the hydrolysis of UDP-3-O-myristoyl-N-acetylglucosamine to form UDP-3-O-myristoylglucosamine and acetate, the committed step in lipid A biosynthesis. The polypeptide is UDP-3-O-acyl-N-acetylglucosamine deacetylase (Campylobacter jejuni subsp. jejuni serotype O:23/36 (strain 81-176)).